Reading from the N-terminus, the 97-residue chain is Mitochondrial import inner membrane translocase subunit Tim8 A (97 aa).

Positions 43 to 66 (CWEKCMDKPGPKLDSRAEACFVNC) match the Twin CX3C motif motif. 2 cysteine pairs are disulfide-bonded: Cys43–Cys66 and Cys47–Cys62. Phosphoserine is present on residues Ser57, Ser87, Ser94, and Ser96.

It belongs to the small Tim family. In terms of assembly, heterohexamer; composed of 3 copies of TIMM8A and 3 copies of TIMM13, named soluble 70 kDa complex. Associates with the TIM22 complex, whose core is composed of TIMM22. Highly expressed in fetal and adult brain, followed by fetal lung, liver and kidney. Also expressed in heart, placenta, lung, liver, kidney, pancreas, skeletal muscle and heart.

Its subcellular location is the mitochondrion inner membrane. Functionally, mitochondrial intermembrane chaperone that participates in the import and insertion of some multi-pass transmembrane proteins into the mitochondrial inner membrane. Also required for the transfer of beta-barrel precursors from the TOM complex to the sorting and assembly machinery (SAM complex) of the outer membrane. Acts as a chaperone-like protein that protects the hydrophobic precursors from aggregation and guide them through the mitochondrial intermembrane space. The TIMM8-TIMM13 complex mediates the import of proteins such as TIMM23, SLC25A12/ARALAR1 and SLC25A13/ARALAR2, while the predominant TIMM9-TIMM10 70 kDa complex mediates the import of much more proteins. Probably necessary for normal neurologic development. The polypeptide is Mitochondrial import inner membrane translocase subunit Tim8 A (TIMM8A) (Homo sapiens (Human)).